A 71-amino-acid chain; its full sequence is UPF0352 protein VCM66_1964 (71 aa).

It belongs to the UPF0352 family.

This is UPF0352 protein VCM66_1964 from Vibrio cholerae serotype O1 (strain M66-2).